A 195-amino-acid chain; its full sequence is Small ribosomal subunit protein uS5 (195 aa).

One can recognise an S5 DRBM domain in the interval 22–85; sequence IVEKLVHINR…EEAKKSMIRV (64 aa). A disordered region spans residues 164 to 195; that stretch reads QVAAKRGKKVSDVIGRRADGASAAQPAADAEG. Residues 172–182 are compositionally biased toward basic and acidic residues; it reads KVSDVIGRRAD. Residues 183–195 are compositionally biased toward low complexity; that stretch reads GASAAQPAADAEG.

This sequence belongs to the universal ribosomal protein uS5 family. As to quaternary structure, part of the 30S ribosomal subunit. Contacts proteins S4 and S8.

In terms of biological role, with S4 and S12 plays an important role in translational accuracy. Its function is as follows. Located at the back of the 30S subunit body where it stabilizes the conformation of the head with respect to the body. The sequence is that of Small ribosomal subunit protein uS5 from Phenylobacterium zucineum (strain HLK1).